The sequence spans 593 residues: Transmembrane 9 superfamily member 4 (593 aa).

Residues 1 to 25 (MVLLPSMTSLLLVFLFLYGVSPVIS) form the signal peptide. Residues 26-230 (DGSDHRYKVG…SMPHHLEIHW (205 aa)) lie on the Lumenal side of the membrane. A helical transmembrane segment spans residues 231 to 251 (FSIINSCVTVLLLTGFLATIL). Residues 252 to 303 (MRVLKNDFVKYAHDEEAVDDQEETGWKLIHGDVFRFPKHKSLLAAALGSGTQ) are Cytoplasmic-facing. Residues 304–324 (LFTLAVFIFMLALVGVFYPYN) traverse the membrane as a helical segment. Topologically, residues 325-326 (RG) are lumenal. Residues 327-347 (ALFTALVVIYALTSGIAGYTA) form a helical membrane-spanning segment. At 348-366 (ASFYCQLEGTNWVRNVILT) the chain is on the cytoplasmic side. Residues 367–387 (GSLFCGPLLITFSFLNTVAIA) traverse the membrane as a helical segment. At 388-398 (YQATAALPFGT) the chain is on the lumenal side. Residues 399–419 (IVVIFLIWALVTSPLLILGGI) form a helical membrane-spanning segment. At 420–453 (AGKNRKSEFQAPCRTTKYPREIPPMRWYRRTLPQ) the chain is on the cytoplasmic side. Residues 454-474 (MAMAGFLPFSAIYIELYYIFA) traverse the membrane as a helical segment. At 475-486 (SVWGHRIYTIYS) the chain is on the lumenal side. The helical transmembrane segment at 487 to 507 (ILSIVFLILVIVTAFITVALT) threads the bilayer. Topologically, residues 508 to 522 (YFQLAAEDHEWWWRS) are cytoplasmic. The helical transmembrane segment at 523 to 543 (LLCGGSTGLFIYAYCLYYYYA) threads the bilayer. Residues 544-554 (RSDMSGFMQTS) are Lumenal-facing. The chain crosses the membrane as a helical span at residues 555–575 (FFFGYMACICYGFFLMLGTIG). Residues 576 to 593 (FCASLLFVRHIYRSIKCE) are Cytoplasmic-facing. The short motif at 582 to 587 (FVRHIY) is the Endoplasmic reticulum export signal element. Positions 591–593 (KCE) match the Golgi retention signal motif.

Belongs to the nonaspanin (TM9SF) (TC 9.A.2) family.

Its subcellular location is the endosome membrane. The protein localises to the golgi apparatus membrane. This chain is Transmembrane 9 superfamily member 4, found in Arabidopsis thaliana (Mouse-ear cress).